The primary structure comprises 469 residues: uncharacterized protein (469 aa).

This is an uncharacterized protein from Methanocaldococcus jannaschii (strain ATCC 43067 / DSM 2661 / JAL-1 / JCM 10045 / NBRC 100440) (Methanococcus jannaschii).